The primary structure comprises 165 residues: Ubiquitin D (165 aa).

2 Ubiquitin-like domains span residues 6–81 (SCLC…LKVV) and 90–163 (LFLV…CYCI).

Belongs to the ubiquitin D family. As to quaternary structure, interacts directly with the 26S proteasome. Interacts with NUB1; this interaction facilitates the linking of UBD-conjugated target protein to the proteasome complex and accelerates its own degradation and that of its conjugates. Interacts (via ubiquitin-like 1 domain) with the spindle checkpoint protein MAD2L1 during mitosis. Present in aggresomes of proteasome inhibited cells. Interacts with HDAC6 under proteasome impairment conditions. Forms a thioester with UBA6 in cells stimulated with tumor necrosis factor-alpha (TNFa) and interferon-gamma (IFNg). Interacts with SQSTM1 and TP53/p53. In terms of processing, can be acetylated. Constitutively expressed in mature dendritic cells and B-cells. Mostly expressed in the reticuloendothelial system (e.g. thymus, spleen), the gastrointestinal system, kidney, lung and prostate gland.

The protein localises to the nucleus. It is found in the cytoplasm. Ubiquitin-like protein modifier which can be covalently attached to target proteins and subsequently leads to their degradation by the 26S proteasome, in a NUB1-dependent manner. Conjugation to the target protein is activated by UBA6 via adenylation of its C-terminal glycine. Promotes the expression of the proteasome subunit beta type-9 (PSMB9/LMP2). Regulates TNF-alpha-induced and LPS-mediated activation of the central mediator of innate immunity NF-kappa-B by promoting TNF-alpha-mediated proteasomal degradation of ubiquitinated-I-kappa-B-alpha. Required for TNF-alpha-induced p65 nuclear translocation in renal tubular epithelial cells (RTECs). May be involved in dendritic cell (DC) maturation, the process by which immature dendritic cells differentiate into fully competent antigen-presenting cells that initiate T-cell responses. Mediates mitotic non-disjunction and chromosome instability, in long-term in vitro culture and cancers, by abbreviating mitotic phase and impairing the kinetochore localization of MAD2L1 during the prometaphase stage of the cell cycle. May be involved in the formation of aggresomes when proteasome is saturated or impaired. Mediates apoptosis in a caspase-dependent manner, especially in renal epithelium and tubular cells during renal diseases such as polycystic kidney disease and Human immunodeficiency virus (HIV)-associated nephropathy (HIVAN). This Homo sapiens (Human) protein is Ubiquitin D (UBD).